Consider the following 147-residue polypeptide: Methylmalonyl-CoA mutase homolog (147 aa).

To methylmalonyl-CoA mutase.

The chain is Methylmalonyl-CoA mutase homolog from Alkalihalophilus pseudofirmus (strain ATCC BAA-2126 / JCM 17055 / OF4) (Bacillus pseudofirmus).